The chain runs to 117 residues: Large ribosomal subunit protein bL17 (117 aa).

It belongs to the bacterial ribosomal protein bL17 family. As to quaternary structure, part of the 50S ribosomal subunit. Contacts protein L32.

The sequence is that of Large ribosomal subunit protein bL17 from Coprothermobacter proteolyticus (strain ATCC 35245 / DSM 5265 / OCM 4 / BT).